We begin with the raw amino-acid sequence, 35 residues long: Potassium channel toxin alpha-KTx 6.12 (35 aa).

A Pyrrolidone carboxylic acid modification is found at glutamine 1. Disulfide bonds link cysteine 4–cysteine 24, cysteine 10–cysteine 29, cysteine 14–cysteine 31, and cysteine 19–cysteine 34. Lysine 35 is subject to Lysine amide.

Belongs to the short scorpion toxin superfamily. Potassium channel inhibitor family. Alpha-KTx 06 subfamily. In terms of assembly, monomer. Expressed by the venom gland.

It is found in the secreted. Functionally, high affinity blocker of Kv1.3/KCNA3 channels of human T cells. Blocks Kv1.2/KCNA2 with an order of magnitude smaller than for Kv1.3/KCNA3. This is Potassium channel toxin alpha-KTx 6.12 from Anuroctonus phaiodactylus (Mafia scorpion).